The primary structure comprises 255 residues: Undecaprenyl-diphosphatase (255 aa).

6 helical membrane passes run 1-21 (MDII…FLPI), 75-95 (IIIS…IVYQ), 96-116 (LFTV…FLIV), 174-194 (TEFS…FDIV), 203-223 (GDIS…LITI), and 234-254 (NFVP…MFFV).

The protein belongs to the UppP family.

The protein localises to the cell membrane. It carries out the reaction di-trans,octa-cis-undecaprenyl diphosphate + H2O = di-trans,octa-cis-undecaprenyl phosphate + phosphate + H(+). Catalyzes the dephosphorylation of undecaprenyl diphosphate (UPP). The polypeptide is Undecaprenyl-diphosphatase (Methanococcus aeolicus (strain ATCC BAA-1280 / DSM 17508 / OCM 812 / Nankai-3)).